A 137-amino-acid polypeptide reads, in one-letter code: DNA-directed RNA polymerase I subunit RPA14 (137 aa).

The segment at 100–137 (PPAQDFSAAPIQVSTTEKKETSIGVSATGGKKTTFADE) is disordered. Phosphoserine is present on Ser121.

In terms of assembly, component of the RNA polymerase I (Pol I) complex consisting of 14 subunits: RPA135, RPA190, RPC40, RPA14, RPB5, RPO26, RPA43, RPB8, RPA12, RPB10, RPC19, RPC10, RPA49 and RPA34. The complex is composed of a horseshoe-shaped core containing ten subunits (RPA135, RPA190, RPB5, RPO26, RPB8, RPB10, RPC10, RPA12, RPC19 and RPC40) where RPA135 and RPA190 form the DNA-binding cleft. Outside of the core, RPA14 and RPA43 form the stalk that mediates interactions with transcription initiation factors and newly synthesized RNA. In terms of processing, the N-terminus is blocked.

Its subcellular location is the nucleus. It localises to the nucleolus. Its function is as follows. DNA-dependent RNA polymerases catalyze the transcription of DNA into RNA using the four ribonucleoside triphosphates as substrates. Component of RNA polymerase I (Pol I) which synthesizes ribosomal RNA precursors. RPA14 seems to play a role in the stability of subunits RPO26 and RPA43. In vitro, the RPA14-RPA43 subcomplex binds single-stranded RNA. This chain is DNA-directed RNA polymerase I subunit RPA14 (RPA14), found in Saccharomyces cerevisiae (strain ATCC 204508 / S288c) (Baker's yeast).